A 142-amino-acid chain; its full sequence is Transcriptional regulator MraZ (142 aa).

SpoVT-AbrB domains follow at residues 5 to 47 (EYQH…TINE) and 76 to 119 (ACIV…SREK).

Belongs to the MraZ family. Forms oligomers.

Its subcellular location is the cytoplasm. The protein resides in the nucleoid. This Clostridium botulinum (strain Eklund 17B / Type B) protein is Transcriptional regulator MraZ.